The sequence spans 166 residues: Ribosome maturation factor RimM (166 aa).

Residues 94–166 form the PRC barrel domain; sequence GDEYYWRDLM…EMVVRLLPGL (73 aa).

It belongs to the RimM family. In terms of assembly, binds ribosomal protein uS19.

The protein resides in the cytoplasm. An accessory protein needed during the final step in the assembly of 30S ribosomal subunit, possibly for assembly of the head region. Essential for efficient processing of 16S rRNA. May be needed both before and after RbfA during the maturation of 16S rRNA. It has affinity for free ribosomal 30S subunits but not for 70S ribosomes. The sequence is that of Ribosome maturation factor RimM from Syntrophus aciditrophicus (strain SB).